The primary structure comprises 376 residues: NIF3-like protein 1 (376 aa).

Lys108 carries the N6-acetyllysine modification. Positions 243 to 376 (LLLHTGMGRL…ETDRDPLRVV (134 aa)) are mediates interaction with COPS2. A Phosphothreonine modification is found at Thr254. Phosphoserine is present on Ser258.

Belongs to the GTP cyclohydrolase I type 2/NIF3 family. In terms of assembly, homodimer. Interacts with COPS2. Interacts with THOC7.

It is found in the cytoplasm. The protein resides in the nucleus. Functionally, may function as a transcriptional corepressor through its interaction with COPS2, negatively regulating the expression of genes involved in neuronal differentiation. The chain is NIF3-like protein 1 from Rattus norvegicus (Rat).